The sequence spans 435 residues: Protein translocase subunit SecY (435 aa).

The next 10 helical transmembrane spans lie at 19 to 39 (ILFT…TVPG), 68 to 88 (FSVF…VQLL), 116 to 136 (YIAL…FDTL), 147 to 167 (VQTY…VTWL), 179 to 199 (GVSM…IKGI), 216 to 236 (FIFV…TTFV), 269 to 289 (VIPV…FQVV), 311 to 331 (ISGM…YTFV), 372 to 392 (VGSL…DVFG), and 395 to 415 (DAVA…IEGM).

Belongs to the SecY/SEC61-alpha family. Component of the Sec protein translocase complex. Heterotrimer consisting of SecY, SecE and SecG subunits. The heterotrimers can form oligomers, although 1 heterotrimer is thought to be able to translocate proteins. Interacts with the ribosome. Interacts with SecDF, and other proteins may be involved. Interacts with SecA.

The protein localises to the cell membrane. In terms of biological role, the central subunit of the protein translocation channel SecYEG. Consists of two halves formed by TMs 1-5 and 6-10. These two domains form a lateral gate at the front which open onto the bilayer between TMs 2 and 7, and are clamped together by SecE at the back. The channel is closed by both a pore ring composed of hydrophobic SecY resides and a short helix (helix 2A) on the extracellular side of the membrane which forms a plug. The plug probably moves laterally to allow the channel to open. The ring and the pore may move independently. This chain is Protein translocase subunit SecY, found in Streptococcus sanguinis (strain SK36).